Here is a 272-residue protein sequence, read N- to C-terminus: 4-hydroxy-tetrahydrodipicolinate reductase (272 aa).

NAD(+) is bound by residues 11 to 16 and glutamate 37; that span reads GAGGRM. An NADP(+)-binding site is contributed by arginine 38. NAD(+)-binding positions include 101–103 and 125–128; these read GTT and AANF. Histidine 158 acts as the Proton donor/acceptor in catalysis. Histidine 159 contributes to the (S)-2,3,4,5-tetrahydrodipicolinate binding site. Lysine 162 (proton donor) is an active-site residue. 168–169 contacts (S)-2,3,4,5-tetrahydrodipicolinate; that stretch reads GT.

Belongs to the DapB family. As to quaternary structure, homotetramer.

The protein localises to the cytoplasm. The enzyme catalyses (S)-2,3,4,5-tetrahydrodipicolinate + NAD(+) + H2O = (2S,4S)-4-hydroxy-2,3,4,5-tetrahydrodipicolinate + NADH + H(+). It catalyses the reaction (S)-2,3,4,5-tetrahydrodipicolinate + NADP(+) + H2O = (2S,4S)-4-hydroxy-2,3,4,5-tetrahydrodipicolinate + NADPH + H(+). It functions in the pathway amino-acid biosynthesis; L-lysine biosynthesis via DAP pathway; (S)-tetrahydrodipicolinate from L-aspartate: step 4/4. Functionally, catalyzes the conversion of 4-hydroxy-tetrahydrodipicolinate (HTPA) to tetrahydrodipicolinate. This chain is 4-hydroxy-tetrahydrodipicolinate reductase, found in Edwardsiella ictaluri (strain 93-146).